The following is a 238-amino-acid chain: Triosephosphate isomerase (238 aa).

Residue 7 to 9 (NFK) participates in substrate binding. The Electrophile role is filled by histidine 91. Glutamate 158 functions as the Proton acceptor in the catalytic mechanism. 2 residues coordinate substrate: glycine 164 and serine 200.

Belongs to the triosephosphate isomerase family. As to quaternary structure, homodimer.

The protein resides in the cytoplasm. It catalyses the reaction D-glyceraldehyde 3-phosphate = dihydroxyacetone phosphate. It participates in carbohydrate biosynthesis; gluconeogenesis. Its pathway is carbohydrate degradation; glycolysis; D-glyceraldehyde 3-phosphate from glycerone phosphate: step 1/1. In terms of biological role, involved in the gluconeogenesis. Catalyzes stereospecifically the conversion of dihydroxyacetone phosphate (DHAP) to D-glyceraldehyde-3-phosphate (G3P). In Ureaplasma parvum serovar 3 (strain ATCC 27815 / 27 / NCTC 11736), this protein is Triosephosphate isomerase.